A 107-amino-acid chain; its full sequence is Flagellar transcriptional regulator FlhD (107 aa).

The protein belongs to the FlhD family. Homodimer; disulfide-linked. Forms a heterohexamer composed of two FlhC and four FlhD subunits. Each FlhC binds a FlhD dimer, forming a heterotrimer, and a hexamer assembles by dimerization of two heterotrimers.

It localises to the cytoplasm. Functions in complex with FlhC as a master transcriptional regulator that regulates transcription of several flagellar and non-flagellar operons by binding to their promoter region. Activates expression of class 2 flagellar genes, including fliA, which is a flagellum-specific sigma factor that turns on the class 3 genes. Also regulates genes whose products function in a variety of physiological pathways. This chain is Flagellar transcriptional regulator FlhD, found in Bordetella avium (strain 197N).